A 620-amino-acid polypeptide reads, in one-letter code: Proline--tRNA ligase (620 aa).

It belongs to the class-II aminoacyl-tRNA synthetase family. ProS type 1 subfamily. In terms of assembly, homodimer.

It localises to the cytoplasm. The enzyme catalyses tRNA(Pro) + L-proline + ATP = L-prolyl-tRNA(Pro) + AMP + diphosphate. Catalyzes the attachment of proline to tRNA(Pro) in a two-step reaction: proline is first activated by ATP to form Pro-AMP and then transferred to the acceptor end of tRNA(Pro). As ProRS can inadvertently accommodate and process non-cognate amino acids such as alanine and cysteine, to avoid such errors it has two additional distinct editing activities against alanine. One activity is designated as 'pretransfer' editing and involves the tRNA(Pro)-independent hydrolysis of activated Ala-AMP. The other activity is designated 'posttransfer' editing and involves deacylation of mischarged Ala-tRNA(Pro). The misacylated Cys-tRNA(Pro) is not edited by ProRS. The chain is Proline--tRNA ligase from Streptococcus thermophilus (strain ATCC BAA-491 / LMD-9).